A 257-amino-acid polypeptide reads, in one-letter code: Protein THYLAKOID ASSEMBLY 8-like, chloroplastic (257 aa).

A chloroplast-targeting transit peptide spans 1 to 55; the sequence is MTAIRVCSRKFPTFASIFFQNITRNPSIHRISFSNLKPKTLLHPIPPKPFTVFVS. 2 PPR repeats span residues 142 to 176 and 177 to 211; these read DVFM…NLFP and DSQT…PDPP.

The protein belongs to the PPR family. P subfamily.

It localises to the plastid. Its subcellular location is the chloroplast. Binds weakly to specific single strand RNA (ssRNA). The polypeptide is Protein THYLAKOID ASSEMBLY 8-like, chloroplastic (Arabidopsis thaliana (Mouse-ear cress)).